The following is a 340-amino-acid chain: MRVEEFDYTLPEERIATYPPAERGSTRLIVLDRAADSITHSVYASLHERLRPGDLLVLNNSKVIRARLIANKPTGGRIELMLLEKHEGVQNLALYRGRLKVGDRLLAHGAELTVEALPDHGVARLSCDTANLTELFEAHGSVPIPPYLKRDAEEVDRERYQTVFAELPGSVAAPTASLNLTDELLEKIKAKGVDVVHITLHVGLGTFLPIRSETFEEHVMHREFYNIPESSAHKIGEAKARGGRVVAVGTTVTRALEHAAPRLLDSDFSQEVSGEADIFIYPGYEFRIIDALLTNFHAPRSTVLMLTAAFAGKELLRRAYQEALERDYRFLSYGDSMFIS.

Belongs to the QueA family. Monomer.

It is found in the cytoplasm. It carries out the reaction 7-aminomethyl-7-carbaguanosine(34) in tRNA + S-adenosyl-L-methionine = epoxyqueuosine(34) in tRNA + adenine + L-methionine + 2 H(+). It functions in the pathway tRNA modification; tRNA-queuosine biosynthesis. In terms of biological role, transfers and isomerizes the ribose moiety from AdoMet to the 7-aminomethyl group of 7-deazaguanine (preQ1-tRNA) to give epoxyqueuosine (oQ-tRNA). This Chlorobaculum parvum (strain DSM 263 / NCIMB 8327) (Chlorobium vibrioforme subsp. thiosulfatophilum) protein is S-adenosylmethionine:tRNA ribosyltransferase-isomerase.